We begin with the raw amino-acid sequence, 156 residues long: Ribosomal RNA large subunit methyltransferase H (156 aa).

S-adenosyl-L-methionine contacts are provided by residues L73, G104, and 123–128; that span reads LSPLTL.

This sequence belongs to the RNA methyltransferase RlmH family. In terms of assembly, homodimer.

Its subcellular location is the cytoplasm. The enzyme catalyses pseudouridine(1915) in 23S rRNA + S-adenosyl-L-methionine = N(3)-methylpseudouridine(1915) in 23S rRNA + S-adenosyl-L-homocysteine + H(+). Its function is as follows. Specifically methylates the pseudouridine at position 1915 (m3Psi1915) in 23S rRNA. The sequence is that of Ribosomal RNA large subunit methyltransferase H from Marinobacter nauticus (strain ATCC 700491 / DSM 11845 / VT8) (Marinobacter aquaeolei).